Consider the following 134-residue polypeptide: Profilin-2 (134 aa).

A disulfide bridge connects residues Cys13 and Cys118. Residues 84–100 (AVIRGKKGSGGITIKKT) carry the Involved in PIP2 interaction motif. A Phosphothreonine modification is found at Thr114.

Belongs to the profilin family. As to quaternary structure, occurs in many kinds of cells as a complex with monomeric actin in a 1:1 ratio. Post-translationally, phosphorylated by MAP kinases.

It is found in the cytoplasm. Its subcellular location is the cytoskeleton. In terms of biological role, binds to actin and affects the structure of the cytoskeleton. At high concentrations, profilin prevents the polymerization of actin, whereas it enhances it at low concentrations. This Olea europaea (Common olive) protein is Profilin-2.